The chain runs to 495 residues: Putative aldehyde dehydrogenase AldA (495 aa).

Residue glycine 212–glycine 218 coordinates NAD(+). Catalysis depends on residues glutamate 256 and cysteine 290.

This sequence belongs to the aldehyde dehydrogenase family.

The catalysed reaction is an aldehyde + NAD(+) + H2O = a carboxylate + NADH + 2 H(+). The protein is Putative aldehyde dehydrogenase AldA (aldA) of Staphylococcus aureus (strain MRSA252).